Consider the following 150-residue polypeptide: FAD synthase (150 aa).

ATP is bound by residues 11–12, 16–19, Asp-96, and Tyr-124; these read TF and HPGH.

This sequence belongs to the archaeal FAD synthase family. Homodimer. It depends on a divalent metal cation as a cofactor.

The catalysed reaction is FMN + ATP + H(+) = FAD + diphosphate. It functions in the pathway cofactor biosynthesis; FAD biosynthesis; FAD from FMN: step 1/1. Functionally, catalyzes the transfer of the AMP portion of ATP to flavin mononucleotide (FMN) to produce flavin adenine dinucleotide (FAD) coenzyme. The polypeptide is FAD synthase (Methanococcus maripaludis (strain DSM 14266 / JCM 13030 / NBRC 101832 / S2 / LL)).